We begin with the raw amino-acid sequence, 203 residues long: Outer-membrane lipoprotein carrier protein (203 aa).

An N-terminal signal peptide occupies residues 1-21; sequence MKKLIISCCLLATFSAAGAWA. A disordered region spans residues 174 to 203; it reads ALKSQQSGPISADKFKFRPPKGVTVDDQRQ.

The protein belongs to the LolA family. As to quaternary structure, monomer.

Its subcellular location is the periplasm. Functionally, participates in the translocation of lipoproteins from the inner membrane to the outer membrane. Only forms a complex with a lipoprotein if the residue after the N-terminal Cys is not an aspartate (The Asp acts as a targeting signal to indicate that the lipoprotein should stay in the inner membrane). This chain is Outer-membrane lipoprotein carrier protein, found in Erwinia tasmaniensis (strain DSM 17950 / CFBP 7177 / CIP 109463 / NCPPB 4357 / Et1/99).